Here is a 200-residue protein sequence, read N- to C-terminus: Putative TLC domain-containing protein L438 (200 aa).

Residues 1-193 enclose the TLC domain; sequence MDYKQSNLFL…ILKILRAKLF (193 aa). 6 helical membrane passes run 9–29, 43–63, 74–94, 96–116, 131–151, and 165–185; these read FLFPIGLGSTYIFYKKICGTF, THGILMLTLVYFLSDYYLMIV, VHHFIGIVSIYFSYMKYYYLI, YLFAYLTFELSTPFLNIAIKY, LAFFILFTVVRIIFGTYLWFV, and YLIVLPTILQFLNYWWYYRIL.

Its subcellular location is the membrane. The polypeptide is Putative TLC domain-containing protein L438 (Acanthamoeba polyphaga mimivirus (APMV)).